The following is a 511-amino-acid chain: Lariat debranching enzyme (511 aa).

Residues Cys-52, His-54, Asp-83, and Asn-128 each contribute to the a divalent metal cation site. Positions Ser-168–Arg-198 are lariat recognition loop. A divalent metal cation-binding residues include His-226, His-278, and His-280. The segment at Glu-473–Leu-511 is disordered. Over residues Ile-477–Lys-498 the composition is skewed to basic and acidic residues.

This sequence belongs to the lariat debranching enzyme family. Fe(2+) is required as a cofactor. It depends on Zn(2+) as a cofactor. The cofactor is Mn(2+).

The protein localises to the nucleus. Active in presence of diverse metals including Fe(2+), Zn(2+), Mn(2+). Binds two metal cations in two adjacent alpha and beta metal-binding pockets. Its function is as follows. Cleaves the 2'-5' phosphodiester linkage at the branch point of lariat intron pre-mRNAs after splicing and converts them into linear molecules that are subsequently degraded. It thereby facilitates ribonucleotide turnover. The polypeptide is Lariat debranching enzyme (dbr-1) (Caenorhabditis briggsae).